Consider the following 89-residue polypeptide: Small ribosomal subunit protein uS15 (89 aa).

It belongs to the universal ribosomal protein uS15 family. In terms of assembly, part of the 30S ribosomal subunit. Forms a bridge to the 50S subunit in the 70S ribosome, contacting the 23S rRNA.

Its function is as follows. One of the primary rRNA binding proteins, it binds directly to 16S rRNA where it helps nucleate assembly of the platform of the 30S subunit by binding and bridging several RNA helices of the 16S rRNA. Functionally, forms an intersubunit bridge (bridge B4) with the 23S rRNA of the 50S subunit in the ribosome. The protein is Small ribosomal subunit protein uS15 of Aeromonas hydrophila subsp. hydrophila (strain ATCC 7966 / DSM 30187 / BCRC 13018 / CCUG 14551 / JCM 1027 / KCTC 2358 / NCIMB 9240 / NCTC 8049).